The sequence spans 451 residues: CCAAT/enhancer-binding protein (451 aa).

Disordered stretches follow at residues 210–236 (TYNN…EPID), 267–298 (QSNN…NSTN), and 328–389 (LKHH…AKVR). Composition is skewed to low complexity over residues 218–228 (ENSSVGSDSSS), 268–298 (SNNL…NSTN), and 334–350 (LQQT…QHAQ). Positions 359–370 (KHVDKGTEEYRR) are enriched in basic and acidic residues. Residues 365 to 428 (TEEYRRRRER…SLHKQIYMQL (64 aa)) form the bZIP domain. The segment at 369–398 (RRRRERNNIAVRKSREKAKVRSKEVEERVK) is basic motif. Residues 400–407 (LLKEKDAL) form a leucine-zipper region.

It belongs to the bZIP family. C/EBP subfamily. Binds DNA as a dimer and can form stable heterodimers.

The protein localises to the nucleus. May be required for the expression of gene products mediating border cell migration. Among the DNA sequences that this protein binds with high affinity is a conserved site within the promoter of its gene. This chain is CCAAT/enhancer-binding protein (slbo), found in Drosophila virilis (Fruit fly).